Reading from the N-terminus, the 383-residue chain is Gap junction alpha-1 protein (383 aa).

Residues 2–23 (GDWSALGKLLDKVQAYSTAGGK) are Cytoplasmic-facing. At serine 5 the chain carries Phosphoserine. Residues 24-44 (VWLSVLFIFRILLLGTAVESA) traverse the membrane as a helical segment. Residues 45–76 (WGDEQSAFRCNTQQPGCENVCYDKSFPISHVR) lie on the Extracellular side of the membrane. Cystine bridges form between cysteine 54–cysteine 193 and cysteine 188–cysteine 199. A helical transmembrane segment spans residues 77 to 97 (FWVLQIIFVSVPTLLYLAHVF). Topologically, residues 98-156 (YVMRKEEKLNKKEEELKVVAQTDGANVDMHLKQIEIKKFKYGIEEHGKVKMRGGLLRTY) are cytoplasmic. Lysine 145 participates in a covalent cross-link: Glycyl lysine isopeptide (Lys-Gly) (interchain with G-Cter in SUMO). A helical transmembrane segment spans residues 157–177 (IISILFKSVFEVAFLLIQWYI). Topologically, residues 178-208 (YGFSLSAVYTCKRDPCPHQVDCFLSRPTEKT) are extracellular. A helical membrane pass occupies residues 209–229 (IFIIFMLVVSLVSLALNIIEL). Over 230-383 (FYVFFKGVKD…SRPRPDDLEI (154 aa)) the chain is Cytoplasmic. Lysine 238 participates in a covalent cross-link: Glycyl lysine isopeptide (Lys-Gly) (interchain with G-Cter in SUMO). The interaction with NOV stretch occupies residues 245–383 (SDPYHTTTGP…SRPRPDDLEI (139 aa)). The residue at position 248 (tyrosine 248) is a Phosphotyrosine. Phosphoserine is present on residues serine 256, serine 258, and serine 263. Residues 265–383 (KYAYFNGCSS…SRPRPDDLEI (119 aa)) form an interaction with UBQLN4 region. Cysteine 272 carries the S-nitrosocysteine modification. Phosphothreonine is present on threonine 276. Serine 307 and serine 315 each carry phosphoserine. Residues 318–333 (QNRMGQAGSTISNSHA) are compositionally biased toward polar residues. Residues 318 to 383 (QNRMGQAGST…SRPRPDDLEI (66 aa)) are disordered. Phosphoserine; by CK1 is present on serine 326. At threonine 327 the chain carries Phosphothreonine. A phosphoserine; by CK1 mark is found at serine 329 and serine 331. The span at 339-352 (PDDHQNSKKLDAGH) shows a compositional bias: basic and acidic residues. Phosphoserine is present on residues serine 345 and serine 366. Residues 363-375 (RPSSRASSRASSR) are compositionally biased toward low complexity. The residue at position 369 (serine 369) is a Phosphoserine; by PKC/PRKCG and PKC/PRKCD. Phosphoserine is present on residues serine 370 and serine 374.

It belongs to the connexin family. Alpha-type (group II) subfamily. A connexon is composed of a hexamer of connexins. Interacts with SGSM3. Interacts with RIC1/CIP150. Interacts with CNST and CSNK1D. Interacts (via C-terminus) with TJP1. Interacts (via C-terminus) with SRC (via SH3 domain). Interacts (not ubiquitinated) with UBQLN4 (via UBA domain). Interacts with NOV. Interacts with TMEM65. Interacts with ANK3/ANKG and PKP2. Phosphorylation at Ser-326, Ser-329 and Ser-331 by CK1 modulates gap junction assembly. Phosphorylated at Ser-369 by PRKCG; phosphorylation induces disassembly of gap junction plaques and inhibition of gap junction activity. Phosphorylation at Ser-369 by PRKCD triggers its internalization into small vesicles leading to proteasome-mediated degradation. Post-translationally, sumoylated with SUMO1, SUMO2 and SUMO3, which may regulate the level of functional Cx43 gap junctions at the plasma membrane. May be desumoylated by SENP1 or SENP2. In terms of processing, acetylated in the developing cortex; leading to delocalization from the cell membrane.

The protein localises to the cell membrane. It localises to the cell junction. The protein resides in the gap junction. Its subcellular location is the endoplasmic reticulum. Gap junction protein that acts as a regulator of bladder capacity. A gap junction consists of a cluster of closely packed pairs of transmembrane channels, the connexons, through which materials of low MW diffuse from one cell to a neighboring cell. May play a critical role in the physiology of hearing by participating in the recycling of potassium to the cochlear endolymph. Negative regulator of bladder functional capacity: acts by enhancing intercellular electrical and chemical transmission, thus sensitizing bladder muscles to cholinergic neural stimuli and causing them to contract. May play a role in cell growth inhibition through the regulation of NOV expression and localization. Plays an essential role in gap junction communication in the ventricles. In Bos taurus (Bovine), this protein is Gap junction alpha-1 protein (GJA1).